The primary structure comprises 124 residues: Trophoblast-specific protein alpha (124 aa).

Residues 1 to 18 (MTPTIFLVILCLGVASAV) form the signal peptide. 2 disordered regions span residues 51–74 (KLHSSENDQETEGSNIEMSASGQL) and 91–124 (FEEEENKPQPVVDDPEFEDYTESGDGFFVPNQPQ). A compositionally biased stretch (polar residues) spans 62 to 74 (EGSNIEMSASGQL). Residues 103 to 112 (DDPEFEDYTE) show a composition bias toward acidic residues.

The protein localises to the secreted. It is found in the extracellular space. Its function is as follows. It may be a growth factor/hormone, perhaps involved in interaction between the maternal and fetal systems in maintenance of pregnancy. The protein is Trophoblast-specific protein alpha (Tpbpa) of Mus musculus (Mouse).